The primary structure comprises 163 residues: Small ribosomal subunit protein uS3m (163 aa).

Residues 1–31 constitute a mitochondrion transit peptide; that stretch reads MAASLIRQTKLLSVFSSAGCFRSIHSTAACL.

This sequence belongs to the universal ribosomal protein uS3 family. In terms of assembly, component of the mitochondrial ribosome small subunit (28S) which comprises a 12S rRNA and about 30 distinct proteins.

Its subcellular location is the mitochondrion. The sequence is that of Small ribosomal subunit protein uS3m (mrps24) from Danio rerio (Zebrafish).